The following is a 498-amino-acid chain: Protein flp (498 aa).

The next 4 membrane-spanning stretches (helical) occupy residues 6–26, 389–409, 433–453, and 471–491; these read LYFLSISIIILVAISIAIHIT, FNIVTVLMTTLILLAFIFSAY, LTLCLCIAIALILYALPYLIL, and LALITTLIALFSTLIVILLFL.

Its subcellular location is the cell membrane. Its precise function is unknown. Has no penicillin-binding activity and is not involved in methicillin resistance. The protein is Protein flp (flp) of Staphylococcus aureus (strain MW2).